A 120-amino-acid chain; its full sequence is Large ribosomal subunit protein uL18 (120 aa).

Positions M1–D25 are disordered. The segment covering Q10–K21 has biased composition (basic residues).

Belongs to the universal ribosomal protein uL18 family. In terms of assembly, part of the 50S ribosomal subunit; part of the 5S rRNA/L5/L18/L25 subcomplex. Contacts the 5S and 23S rRNAs.

Functionally, this is one of the proteins that bind and probably mediate the attachment of the 5S RNA into the large ribosomal subunit, where it forms part of the central protuberance. The chain is Large ribosomal subunit protein uL18 from Thermosynechococcus vestitus (strain NIES-2133 / IAM M-273 / BP-1).